The chain runs to 329 residues: Glyceraldehyde-3-phosphate dehydrogenase 1 (329 aa).

NAD(+)-binding positions include 11–12 (RI), Asp-33, and Glu-77. The residue at position 148 (Ser-148) is a Phosphoserine. 148–150 (SCT) serves as a coordination point for D-glyceraldehyde 3-phosphate. Catalysis depends on Cys-149, which acts as the Nucleophile. Ser-177 bears the Phosphoserine mark. Thr-179 is a binding site for D-glyceraldehyde 3-phosphate. A Phosphoserine modification is found at Ser-200. D-glyceraldehyde 3-phosphate is bound by residues 208-209 (TG) and Arg-231. Asn-313 is a binding site for NAD(+).

This sequence belongs to the glyceraldehyde-3-phosphate dehydrogenase family. As to quaternary structure, homotetramer.

Its subcellular location is the cytoplasm. The enzyme catalyses D-glyceraldehyde 3-phosphate + phosphate + NAD(+) = (2R)-3-phospho-glyceroyl phosphate + NADH + H(+). The protein operates within carbohydrate degradation; glycolysis; pyruvate from D-glyceraldehyde 3-phosphate: step 1/5. The chain is Glyceraldehyde-3-phosphate dehydrogenase 1 from Kluyveromyces marxianus (Yeast).